A 266-amino-acid chain; its full sequence is Undecaprenyl-diphosphatase (266 aa).

7 helical membrane passes run N41–W61, Y82–D102, A106–L126, I140–L160, L180–G200, I213–C233, and L245–L265.

The protein belongs to the UppP family.

Its subcellular location is the cell inner membrane. It carries out the reaction di-trans,octa-cis-undecaprenyl diphosphate + H2O = di-trans,octa-cis-undecaprenyl phosphate + phosphate + H(+). Its function is as follows. Catalyzes the dephosphorylation of undecaprenyl diphosphate (UPP). Confers resistance to bacitracin. This chain is Undecaprenyl-diphosphatase, found in Bacteroides fragilis (strain ATCC 25285 / DSM 2151 / CCUG 4856 / JCM 11019 / LMG 10263 / NCTC 9343 / Onslow / VPI 2553 / EN-2).